The following is a 691-amino-acid chain: Proprotein convertase subtilisin/kexin type 9 (691 aa).

Residues 1–30 (MGIRCSTWLRWPLSPQLLLLLLLCPTGSRA) form the signal peptide. Residues 31–151 (QDEDGDYEEL…IEEDSLVFAQ (121 aa)) constitute a propeptide that is removed on maturation. Sulfotyrosine is present on Tyr37. Residue Ser46 is modified to Phosphoserine. The region spanning 154-441 (PWNLERIIPA…QRVLTPNRVA (288 aa)) is the Peptidase S8 domain. Active-site charge relay system residues include Asp185 and His225. 2 cysteine pairs are disulfide-bonded: Cys222-Cys254 and Cys322-Cys357. The active-site Charge relay system is Ser385. The tract at residues 449 to 691 (ETGGQLLCRT…PSAKASWVHQ (243 aa)) is C-terminal domain. Intrachain disulfides connect Cys456-Cys526, Cys476-Cys525, and Cys485-Cys508. The Cell attachment site signature appears at 495–497 (RGD). N-linked (GlcNAc...) asparagine glycosylation is present at Asn532. 6 cysteine pairs are disulfide-bonded: Cys533-Cys600, Cys551-Cys599, Cys561-Cys587, Cys607-Cys678, Cys625-Cys677, and Cys634-Cys653. Phosphoserine is present on Ser687.

It belongs to the peptidase S8 family. As to quaternary structure, monomer. Can self-associate to form dimers and higher multimers which may have increased LDLR degrading activity. The precursor protein but not the mature protein may form multimers. Interacts with APOB, VLDLR, LRP8/APOER2 and BACE1. The full-length immature form (pro-PCSK9) interacts with SCNN1A, SCNN1B and SCNN1G. The pro-PCSK9 form (via C-terminal domain) interacts with LDLR. Interacts (via the C-terminal domain) with ANXA2 (via repeat Annexin 1); the interaction inhibits the degradation of LDLR. Requires Ca(2+) as cofactor. Post-translationally, cleavage by furin and PCSK5 generates a truncated inactive protein that is unable to induce LDLR degradation. Undergoes autocatalytic cleavage in the endoplasmic reticulum to release the propeptide from the N-terminus and the cleavage of the propeptide is strictly required for its maturation and activation. The cleaved propeptide however remains associated with the catalytic domain through non-covalent interactions, preventing potential substrates from accessing its active site. As a result, it is secreted from cells as a propeptide-containing, enzymatically inactive protein. In terms of processing, phosphorylation protects the propeptide against proteolysis. Highly expressed in 12-day embryo. In the adult, strongly expressed in liver, small intestine, jejunum, and to a lesser extent in kidney, lung, spleen and thymus. Expression in the liver is up-regulated following partial hepatectomy.

The protein resides in the cytoplasm. Its subcellular location is the secreted. It is found in the endosome. The protein localises to the lysosome. It localises to the cell surface. The protein resides in the endoplasmic reticulum. Its subcellular location is the golgi apparatus. Its activity is regulated as follows. Its proteolytic activity is autoinhibited by the non-covalent binding of the propeptide to the catalytic domain. Inhibited by EGTA. Crucial player in the regulation of plasma cholesterol homeostasis. Binds to low-density lipid receptor family members: low density lipoprotein receptor (LDLR), very low density lipoprotein receptor (VLDLR), apolipoprotein E receptor (LRP1/APOER) and apolipoprotein receptor 2 (LRP8/APOER2), and promotes their degradation in intracellular acidic compartments. Acts via a non-proteolytic mechanism to enhance the degradation of the hepatic LDLR through a clathrin LDLRAP1/ARH-mediated pathway. May prevent the recycling of LDLR from endosomes to the cell surface or direct it to lysosomes for degradation. Can induce ubiquitination of LDLR leading to its subsequent degradation. Inhibits intracellular degradation of APOB via the autophagosome/lysosome pathway in a LDLR-independent manner. Involved in the disposal of non-acetylated intermediates of BACE1 in the early secretory pathway. Inhibits epithelial Na(+) channel (ENaC)-mediated Na(+) absorption by reducing ENaC surface expression primarily by increasing its proteasomal degradation. Regulates neuronal apoptosis via modulation of LRP8/APOER2 levels and related anti-apoptotic signaling pathways. This is Proprotein convertase subtilisin/kexin type 9 (Pcsk9) from Rattus norvegicus (Rat).